Reading from the N-terminus, the 868-residue chain is Rifampicin phosphotransferase (868 aa).

Positions 1 to 313 (MSSFVLDFQE…IYIVQSRPIT (313 aa)) are ATP-binding. Residues Lys22, Arg116, Gly131, Thr135, Gln182, Glu296, Gln308, and Arg310 each contribute to the ATP site. Residues 326 to 756 (NHVYISVGHQ…TSDGEIITGK (431 aa)) are rifampicin-binding. The swivel phosphohistidine stretch occupies residues 769–867 (GLPVSSGVVE…VHGTEGYIEV (99 aa)). The active-site Tele-phosphohistidine intermediate is the His827.

This sequence belongs to the rifampicin phosphotransferase family.

The catalysed reaction is rifampicin + ATP + H2O = 21-phosphorifampicin + AMP + phosphate + 2 H(+). Functionally, catalyzes the phosphorylation of rifampicin, also known as rifampin (RIF), leading to its inactivation. Confers high level resistance to a variety of clinically used rifamycin antibiotics. Does not show phosphoenolpyruvate (PEP) synthase activity. The sequence is that of Rifampicin phosphotransferase from Bacillus cereus (strain ATCC 14579 / DSM 31 / CCUG 7414 / JCM 2152 / NBRC 15305 / NCIMB 9373 / NCTC 2599 / NRRL B-3711).